We begin with the raw amino-acid sequence, 152 residues long: Large ribosomal subunit protein uL15 (152 aa).

A disordered region spans residues 1–57 (MTSTLNTLKSNSGSRKKKLRKGRGIAAGQGASCGFGMRGQKSRSGRPTRPGFEGGQM). Positions 14–23 (SRKKKLRKGR) are enriched in basic residues. The span at 25 to 37 (IAAGQGASCGFGM) shows a compositional bias: gly residues.

The protein belongs to the universal ribosomal protein uL15 family. In terms of assembly, part of the 50S ribosomal subunit.

Binds to the 23S rRNA. The sequence is that of Large ribosomal subunit protein uL15 from Prochlorococcus marinus (strain MIT 9215).